The chain runs to 976 residues: Protein PLASTID MOVEMENT IMPAIRED 1-RELATED 2 (976 aa).

One can recognise a C2 NT-type domain in the interval 81–229 (IAHFGQRRFD…VLNLSFDYSV (149 aa)). The segment covering 309–319 (KQAADSDDSGK) has biased composition (basic and acidic residues). Disordered regions lie at residues 309–343 (KQAA…ESSR) and 381–419 (NLLP…STEK). A compositionally biased stretch (low complexity) spans 394–414 (STFSSQVISESSESKSPSAMD).

Its function is as follows. Seems not necessary for chloroplast and nuclear photorelocation movements. This chain is Protein PLASTID MOVEMENT IMPAIRED 1-RELATED 2, found in Arabidopsis thaliana (Mouse-ear cress).